Here is a 366-residue protein sequence, read N- to C-terminus: Zinc transporter ZIP13 (366 aa).

The Lumenal segment spans residues 1-5 (MTKQK). The chain crosses the membrane as a helical span at residues 6–26 (LLLNGTFSLILIVACEAQQLP). At 27–57 (RSHAASSSGPLCEKEAESWGNLLSSERLDAW) the chain is on the cytoplasmic side. Residues 58 to 78 (ICSLIGSFMVGLSGIFPLLVI) form a helical membrane-spanning segment. The Lumenal portion of the chain corresponds to 79–97 (PFETGAALRSEAGSRRLKQ). The helical transmembrane segment at 98–118 (LLSFAIGGLLGNVFLHLLPEA) threads the bilayer. Residues 119–137 (WAYTCSAAAGEGQSFQQQK) are Cytoplasmic-facing. Residues 138–158 (LLGLWVIIGFLTFLALEKIFL) form a helical membrane-spanning segment. The Lumenal portion of the chain corresponds to 159–225 (EKEEEECPGV…NRIKISGYLN (67 aa)). Residues 183–205 (SGYPPSKVAGKSQRAEKNSTQCN) form a disordered region. Residues 226–246 (LLANTIDNFTHGLAVAASFLV) traverse the membrane as a helical segment. The Cytoplasmic portion of the chain corresponds to 247-282 (SRKVGFLTTMAILLHEIPHEVGDFAILLRAGFDRWS). Residues 261-266 (HEIPHE) carry the XEXPHE-motif motif. Residues 283-303 (AAKMQLSTALGGIVGACFAIC) traverse the membrane as a helical segment. Over 304-313 (AQSPKGAGET) the chain is Lumenal. Residues 314–334 (VAWILPFTSGGFLYIALVNVV) form a helical membrane-spanning segment. Over 335–343 (PDLLEEKNP) the chain is Cytoplasmic. Residues 344–364 (WNSLQQILLLCTGITVMVLLA) form a helical membrane-spanning segment. The Lumenal portion of the chain corresponds to 365 to 366 (HN).

It belongs to the ZIP transporter (TC 2.A.5) family. As to quaternary structure, homodimer.

It is found in the golgi apparatus membrane. Its subcellular location is the cytoplasmic vesicle membrane. It localises to the endoplasmic reticulum membrane. It catalyses the reaction Zn(2+)(in) = Zn(2+)(out). Functionally, functions as a zinc transporter transporting Zn(2+) from the Golgi apparatus to the cytosol and thus influences the zinc level at least in areas of the cytosol. The chain is Zinc transporter ZIP13 from Gallus gallus (Chicken).